We begin with the raw amino-acid sequence, 281 residues long: MKIFTNQEMKNYSNMRVGGKAKKLIILEPKEEIIDVYNDKENTDIFILGNGTNILFTDEYMDKIFVCTKKLNKIEDLGKNLVKVETGANLKDLTDFMKDKNYTGIESLFGIPGSIGGLVYMNGGAFGTEIFDKIVSIEVFDENHQIREIKKEDLKVAYRKTEIQDKNWLVLSATFKFDNGFDAARVKEIKELRESKHPLDKPSLGSTFKNPEGDFAARLISECGLKGTIIGNAQIAEKHPNFVLNLGNATFKDIIDILTLVKKSVLEKFGIKLEEEIIIVR.

In terms of domain architecture, FAD-binding PCMH-type spans 17-180 (VGGKAKKLII…LSATFKFDNG (164 aa)). Residue R159 is part of the active site. Catalysis depends on S206, which acts as the Proton donor. The active site involves E276.

It belongs to the MurB family. The cofactor is FAD.

The protein resides in the cytoplasm. It carries out the reaction UDP-N-acetyl-alpha-D-muramate + NADP(+) = UDP-N-acetyl-3-O-(1-carboxyvinyl)-alpha-D-glucosamine + NADPH + H(+). The protein operates within cell wall biogenesis; peptidoglycan biosynthesis. Cell wall formation. This is UDP-N-acetylenolpyruvoylglucosamine reductase from Fusobacterium nucleatum subsp. nucleatum (strain ATCC 25586 / DSM 15643 / BCRC 10681 / CIP 101130 / JCM 8532 / KCTC 2640 / LMG 13131 / VPI 4355).